Reading from the N-terminus, the 230-residue chain is Flagellar L-ring protein (230 aa).

The signal sequence occupies residues 1–15; that stretch reads MSRLPSLSRLCLAIA. Residue C16 is the site of N-palmitoyl cysteine attachment. C16 is lipidated: S-diacylglycerol cysteine.

The protein belongs to the FlgH family. In terms of assembly, the basal body constitutes a major portion of the flagellar organelle and consists of four rings (L,P,S, and M) mounted on a central rod.

It localises to the cell outer membrane. The protein resides in the bacterial flagellum basal body. In terms of biological role, assembles around the rod to form the L-ring and probably protects the motor/basal body from shearing forces during rotation. This Xanthomonas euvesicatoria pv. vesicatoria (strain 85-10) (Xanthomonas campestris pv. vesicatoria) protein is Flagellar L-ring protein.